We begin with the raw amino-acid sequence, 334 residues long: Glycerol-3-phosphate dehydrogenase [NAD(P)+] (334 aa).

NADPH-binding residues include Trp-13, Arg-33, and Lys-106. 3 residues coordinate sn-glycerol 3-phosphate: Lys-106, Gly-137, and Ser-139. Ala-141 contributes to the NADPH binding site. 5 residues coordinate sn-glycerol 3-phosphate: Lys-192, Asp-245, Ser-255, Arg-256, and Asn-257. Lys-192 serves as the catalytic Proton acceptor. Arg-256 is an NADPH binding site. Positions 280 and 282 each coordinate NADPH.

Belongs to the NAD-dependent glycerol-3-phosphate dehydrogenase family.

It is found in the cytoplasm. It carries out the reaction sn-glycerol 3-phosphate + NAD(+) = dihydroxyacetone phosphate + NADH + H(+). The enzyme catalyses sn-glycerol 3-phosphate + NADP(+) = dihydroxyacetone phosphate + NADPH + H(+). It functions in the pathway membrane lipid metabolism; glycerophospholipid metabolism. Catalyzes the reduction of the glycolytic intermediate dihydroxyacetone phosphate (DHAP) to sn-glycerol 3-phosphate (G3P), the key precursor for phospholipid synthesis. The polypeptide is Glycerol-3-phosphate dehydrogenase [NAD(P)+] (Chlamydia pneumoniae (Chlamydophila pneumoniae)).